A 365-amino-acid chain; its full sequence is Eukaryotic translation initiation factor 3 subunit H (365 aa).

In terms of domain architecture, MPN spans 11 to 160 (VKVEALVVMK…LRAFRLSPKF (150 aa)).

This sequence belongs to the eIF-3 subunit H family. In terms of assembly, component of the eukaryotic translation initiation factor 3 (eIF-3) complex.

The protein localises to the cytoplasm. Its function is as follows. Component of the eukaryotic translation initiation factor 3 (eIF-3) complex, which is involved in protein synthesis of a specialized repertoire of mRNAs and, together with other initiation factors, stimulates binding of mRNA and methionyl-tRNAi to the 40S ribosome. The eIF-3 complex specifically targets and initiates translation of a subset of mRNAs involved in cell proliferation. The protein is Eukaryotic translation initiation factor 3 subunit H of Aspergillus terreus (strain NIH 2624 / FGSC A1156).